Reading from the N-terminus, the 243-residue chain is Probable 2-phosphosulfolactate phosphatase (243 aa).

It belongs to the ComB family. It depends on Mg(2+) as a cofactor.

The enzyme catalyses (2R)-O-phospho-3-sulfolactate + H2O = (2R)-3-sulfolactate + phosphate. The sequence is that of Probable 2-phosphosulfolactate phosphatase from Prochlorococcus marinus (strain MIT 9303).